The primary structure comprises 685 residues: Sodium-dependent phosphate transporter 1-B (685 aa).

6 helical membrane passes run 21-41 (IMAP…VLAF), 66-86 (ACIL…AKVS), 106-126 (LMAG…AASF), 162-182 (IVLS…LLFF), 207-227 (ACTI…LLGF), and 234-254 (GIIL…WFFV). A disordered region spans residues 489 to 511 (EGCIEDVVTDRKSSSSSLEERHD). The segment covering 496–511 (VTDRKSSSSSLEERHD) has biased composition (basic and acidic residues). A run of 4 helical transmembrane segments spans residues 517–537 (VSLL…FAHG), 565–585 (ATPI…LWVW), 606–626 (FSIE…GLPI), and 656–676 (IFLA…GIMA).

It belongs to the inorganic phosphate transporter (PiT) (TC 2.A.20) family.

Its subcellular location is the membrane. Functionally, sodium-phosphate symporter which plays a fundamental housekeeping role in phosphate transport. The sequence is that of Sodium-dependent phosphate transporter 1-B (slc20a1-b) from Xenopus laevis (African clawed frog).